The following is a 169-amino-acid chain: Aspartic protease inhibitor 6 (169 aa).

Residue asparagine 1 is glycosylated (N-linked (GlcNAc...) asparagine). Disulfide bonds link cysteine 30–cysteine 75 and cysteine 124–cysteine 134.

Belongs to the protease inhibitor I3 (leguminous Kunitz-type inhibitor) family.

The protein localises to the vacuole. Functionally, inhibitor of cathepsin D (aspartic protease). May also inhibit trypsin and chymotrypsin (serine proteases). Protects the plant by inhibiting proteases of invading organisms. The polypeptide is Aspartic protease inhibitor 6 (Solanum tuberosum (Potato)).